We begin with the raw amino-acid sequence, 240 residues long: Ubiquitin domain-containing protein 1 (240 aa).

The disordered stretch occupies residues 1 to 48; the sequence is MGGCVGRPQGESQRSQSRASGQQRKRAGRNEPLKKERPRWKSDYPMTD. The segment covering 12–22 has biased composition (low complexity); the sequence is SQRSQSRASGQ. Residues 28 to 42 show a composition bias toward basic and acidic residues; the sequence is GRNEPLKKERPRWKS. The region spanning 153–228 is the Ubiquitin-like domain; that stretch reads FQLKVRLSTG…DTSYCKPATR (76 aa).

In terms of biological role, may be involved in the regulation of cellular senescence through a positive feedback loop with TP53. The chain is Ubiquitin domain-containing protein 1 (ubtd1) from Xenopus tropicalis (Western clawed frog).